The primary structure comprises 178 residues: Cytochrome c-type biogenesis protein CcmE (178 aa).

Residues 1-8 (MNPRRKKR) lie on the Cytoplasmic side of the membrane. The helical; Signal-anchor for type II membrane protein transmembrane segment at 9–29 (LAIVGSILIGIGVVSGLVLYA) threads the bilayer. The Periplasmic portion of the chain corresponds to 30 to 178 (LSQNIDLFFT…QLESKKTNSY (149 aa)). His143 and Tyr147 together coordinate heme. The segment at 154–178 (EAAGQKHDKATYSDKQLESKKTNSY) is disordered. Residues 157 to 178 (GQKHDKATYSDKQLESKKTNSY) show a composition bias toward basic and acidic residues.

Belongs to the CcmE/CycJ family.

It localises to the cell inner membrane. Functionally, heme chaperone required for the biogenesis of c-type cytochromes. Transiently binds heme delivered by CcmC and transfers the heme to apo-cytochromes in a process facilitated by CcmF and CcmH. This Colwellia psychrerythraea (strain 34H / ATCC BAA-681) (Vibrio psychroerythus) protein is Cytochrome c-type biogenesis protein CcmE.